The following is an 896-amino-acid chain: Translation initiation factor IF-2 (896 aa).

Disordered stretches follow at residues 53–81 (HGGE…SASK) and 117–301 (AEEA…ESMD). A compositionally biased stretch (polar residues) spans 60 to 79 (TKMTLQRKSVSTLSVGSGSA). The span at 117–227 (AEEAASKAKA…ESEKTGDHHV (111 aa)) shows a compositional bias: basic and acidic residues. Residues 254-266 (ATPAPAAAPANTG) are compositionally biased toward low complexity. Basic and acidic residues predominate over residues 273 to 282 (GKDNRRDSRN). The segment covering 283–294 (ARGGRNARNNRS) has biased composition (low complexity). Residues 394–563 (SRAPVVTIMG…LLEAEVLELK (170 aa)) enclose the tr-type G domain. A G1 region spans residues 403 to 410 (GHVDHGKT). A GTP-binding site is contributed by 403–410 (GHVDHGKT). The segment at 428-432 (GITQH) is G2. A G3 region spans residues 449-452 (DTPG). GTP is bound by residues 449–453 (DTPGH) and 503–506 (NKID). Residues 503-506 (NKID) are G4. Residues 539–541 (SAK) form a G5 region.

It belongs to the TRAFAC class translation factor GTPase superfamily. Classic translation factor GTPase family. IF-2 subfamily.

The protein localises to the cytoplasm. Functionally, one of the essential components for the initiation of protein synthesis. Protects formylmethionyl-tRNA from spontaneous hydrolysis and promotes its binding to the 30S ribosomal subunits. Also involved in the hydrolysis of GTP during the formation of the 70S ribosomal complex. This Shewanella sediminis (strain HAW-EB3) protein is Translation initiation factor IF-2.